A 177-amino-acid chain; its full sequence is B-phycoerythrin beta chain (177 aa).

Phycourobilin-binding residues include C50 and C61. The residue at position 72 (N72) is an N4-methylasparagine. C82 and C158 together coordinate (2R,3E)-phycoerythrobilin.

It belongs to the phycobiliprotein family. In terms of assembly, heteromer of 6 alpha, 6 beta and one gamma chain. Post-translationally, contains two covalently linked phycoerythrobilin chromophores and one covalently linked phycourobilin chromophore.

Its subcellular location is the plastid. It is found in the chloroplast thylakoid membrane. In terms of biological role, light-harvesting photosynthetic bile pigment-protein from the phycobiliprotein complex. The protein is B-phycoerythrin beta chain (cpeB) of Porphyridium sordidum (Red alga).